Here is a 1894-residue protein sequence, read N- to C-terminus: Plexin-A1 (1894 aa).

Residues methionine 1–serine 27 form the signal peptide. A Sema domain is found at serine 28–valine 510. The Extracellular portion of the chain corresponds to serine 28–proline 1242. The N-linked (GlcNAc...) asparagine glycan is linked to asparagine 75. Intrachain disulfides connect cysteine 93-cysteine 102, cysteine 128-cysteine 136, cysteine 284-cysteine 405, cysteine 300-cysteine 356, cysteine 374-cysteine 393, cysteine 513-cysteine 530, cysteine 519-cysteine 561, cysteine 522-cysteine 539, cysteine 533-cysteine 545, and cysteine 596-cysteine 615. N-linked (GlcNAc...) asparagine glycosylation is found at asparagine 658, asparagine 670, and asparagine 699. IPT/TIG domains lie at proline 862–valine 957, proline 959–threonine 1043, proline 1046–tyrosine 1145, and proline 1148–tyrosine 1234. Asparagine 1041 carries N-linked (GlcNAc...) asparagine glycosylation. N-linked (GlcNAc...) asparagine glycans are attached at residues asparagine 1185 and asparagine 1210. Residues alanine 1243–isoleucine 1263 form a helical membrane-spanning segment. Residues leucine 1262–alanine 1315 adopt a coiled-coil conformation. Over alanine 1264–serine 1894 the chain is Cytoplasmic.

The protein belongs to the plexin family. As to quaternary structure, interacts directly with NRP1 and NRP2. Interacts with PLXN1B. Interacts with FARP2, RND1 and KDR/VEGFR2. Binding of SEMA3A leads to dissociation of FARP2. Interacts with CRMP1, DPYSL2/CRMP2, DPYSL3/CRMP3 and DPYSL4/CRMP4. Interacts (via TIG domains) with TREM2; the interaction mediates SEMA6D binding and signaling through TYROBP. In terms of tissue distribution, ubiquitous.

The protein resides in the cell membrane. Functionally, coreceptor for SEMA3A, SEMA3C, SEMA3F and SEMA6D. Necessary for signaling by class 3 semaphorins and subsequent remodeling of the cytoskeleton. Plays a role in axon guidance, invasive growth and cell migration. Class 3 semaphorins bind to a complex composed of a neuropilin and a plexin. The plexin modulates the affinity of the complex for specific semaphorins, and its cytoplasmic domain is required for the activation of down-stream signaling events in the cytoplasm. Acts as coreceptor of TREM2 for SEMA6D in dendritic cells and is involved in the generation of immune responses and skeletal homeostasis. This Mus musculus (Mouse) protein is Plexin-A1 (Plxna1).